A 484-amino-acid polypeptide reads, in one-letter code: Malonate-semialdehyde dehydrogenase 1 (484 aa).

NAD(+) contacts are provided by phenylalanine 154, lysine 178, glutamate 181, arginine 182, and serine 231. Cysteine 286 acts as the Nucleophile in catalysis. Glutamate 384 contributes to the NAD(+) binding site.

The protein belongs to the aldehyde dehydrogenase family. IolA subfamily. In terms of assembly, homotetramer.

It carries out the reaction 3-oxopropanoate + NAD(+) + CoA + H2O = hydrogencarbonate + acetyl-CoA + NADH + H(+). It catalyses the reaction 2-methyl-3-oxopropanoate + NAD(+) + CoA + H2O = propanoyl-CoA + hydrogencarbonate + NADH + H(+). The protein operates within polyol metabolism; myo-inositol degradation into acetyl-CoA; acetyl-CoA from myo-inositol: step 7/7. Functionally, catalyzes the oxidation of malonate semialdehyde (MSA) and methylmalonate semialdehyde (MMSA) into acetyl-CoA and propanoyl-CoA, respectively. Is involved in a myo-inositol catabolic pathway. Bicarbonate, and not CO2, is the end-product of the enzymatic reaction. This Bacillus licheniformis (strain ATCC 14580 / DSM 13 / JCM 2505 / CCUG 7422 / NBRC 12200 / NCIMB 9375 / NCTC 10341 / NRRL NRS-1264 / Gibson 46) protein is Malonate-semialdehyde dehydrogenase 1.